The primary structure comprises 353 residues: Chemerin-like receptor 2 (353 aa).

Over 1–41 (MEVSKEMLFEELDNYSYALDYYSQESDPEEKVYLGLVHWIS) the chain is Extracellular. N-linked (GlcNAc...) asparagine glycosylation occurs at Asn14. The chain crosses the membrane as a helical span at residues 42-62 (LFLYALAFVLGIPGNAIVIWL). The Cytoplasmic segment spans residues 63–73 (MGFKWKKTVTT). Residues 74–94 (LWFLNLAIADFIFVLFLPLYI) traverse the membrane as a helical segment. The Extracellular portion of the chain corresponds to 95–112 (SYVALSFHWPFGLWLCKV). Cys110 and Cys187 are oxidised to a cystine. Residues 113–133 (NSFIAQLNMFSSVFFLTVISL) form a helical membrane-spanning segment. Over 134-154 (DRYIHLLHPGLSHRHRTLKSS) the chain is Cytoplasmic. The chain crosses the membrane as a helical span at residues 155 to 175 (LVVVILVWLLASLLGGPTLYF). The Extracellular portion of the chain corresponds to 176-210 (RDTMEVNNHIICYNNFQEHELTLMRHHVLTWVKFL). The chain crosses the membrane as a helical span at residues 211 to 231 (FGYLFPLLTMSSCYLCLIFKM). Over 232–247 (KKRNILISRKHLWMIL) the chain is Cytoplasmic. Residues 248 to 268 (SVVIAFLVCWTPYHLFSIWEL) traverse the membrane as a helical segment. Over 269 to 286 (SIHHNSSFQNVLQGGIPL) the chain is Extracellular. Residues 287 to 307 (STGLAFLNSCLNPILYVLISK) traverse the membrane as a helical segment. Residues 308–353 (TFQARFRASVAEVLKRSLWEASCSGTVSEQLRSAETKSLSLLETAQ) are Cytoplasmic-facing.

The protein belongs to the chemokine-like receptor (CMKLR) family. As to expression, high expressed in white adipose tissue and skeletal muscle. Expressed in hippocampus and cortex.

The protein resides in the cell membrane. Functionally, receptor for chemoattractant adipokine chemerin/RARRES2 suggesting a role for this receptor in the regulation of inflammation and energy homesotasis. Signals mainly via beta-arrestin pathway. Binding of RARRES2 activates weakly G proteins, calcium mobilization and MAPK1/MAPK3 (ERK1/2) phosphorylation too. Acts also as a receptor for TAFA1, mediates its effects on neuronal stem-cell proliferation and differentiation via the activation of ROCK/ERK and ROCK/STAT3 signaling pathway. In Mus musculus (Mouse), this protein is Chemerin-like receptor 2 (Cmklr2).